We begin with the raw amino-acid sequence, 116 residues long: MINVQTVLKVADNSGAVFVSCIRLLNSSSRVGAGVGDTITVVVKKNIIKKNIKKSKEVKKGQVCSAIILRTIKGVKRWGNFFLRSSSNSVALINKYYLPIGSRLLGPVFREIRTNL.

The protein belongs to the universal ribosomal protein uL14 family.

It is found in the mitochondrion. The chain is Large ribosomal subunit protein uL14m (RPL14) from Acanthamoeba polyphaga (Amoeba).